The sequence spans 411 residues: RING-H2 finger protein ATL65 (411 aa).

Residues 1–32 (MRFVAPPPRSGDNSPSPSPSSGISEEILSRSS) form a disordered region. The span at 10-21 (SGDNSPSPSPSS) shows a compositional bias: low complexity. The chain crosses the membrane as a helical span at residues 36–56 (LEFSPPLIAMVVVLAAAFLFV). The RING-type; atypical zinc finger occupies 156 to 198 (CAVCLLEFEEGDYVRTLPLCFHAFHLECIDEWLRSHPNCPLCR).

The protein belongs to the RING-type zinc finger family. ATL subfamily.

The protein resides in the membrane. The catalysed reaction is S-ubiquitinyl-[E2 ubiquitin-conjugating enzyme]-L-cysteine + [acceptor protein]-L-lysine = [E2 ubiquitin-conjugating enzyme]-L-cysteine + N(6)-ubiquitinyl-[acceptor protein]-L-lysine.. Its pathway is protein modification; protein ubiquitination. The polypeptide is RING-H2 finger protein ATL65 (ATL65) (Arabidopsis thaliana (Mouse-ear cress)).